Reading from the N-terminus, the 622-residue chain is Cilia- and flagella-associated protein 206 (622 aa).

Residues 571-592 are disordered; the sequence is QVYPPKDTSTQSMREDSTGVPR.

The protein belongs to the CFAP206 family.

It localises to the cytoplasm. The protein resides in the cytoskeleton. Its subcellular location is the cilium axoneme. The protein localises to the cilium basal body. Its function is as follows. Essential for sperm motility and is involved in the regulation of the beating frequency of motile cilia on the epithelial cells of the respiratory tract. Required for the establishment of radial spokes in sperm flagella. In Macaca fascicularis (Crab-eating macaque), this protein is Cilia- and flagella-associated protein 206.